Reading from the N-terminus, the 579-residue chain is Thiol:disulfide interchange protein DsbD (579 aa).

The signal sequence occupies residues 1–16 (MKKLFLFFTLIFTAFA). Intrachain disulfides connect Cys124/Cys129 and Cys193/Cys315. 8 helical membrane passes run 178 to 198 (IFGF…LPML), 230 to 250 (LTYT…QIAL), 254 to 274 (YVMI…FGLF), 296 to 316 (GAFG…SPCT), 337 to 357 (AVTL…ITLF), 376 to 396 (FGFV…PEVW), 397 to 417 (ESRL…LQMS), and 420 to 440 (GFGY…VQPL). The region spanning 449–579 (TTTQSAVENM…AFSNWIEKLL (131 aa)) is the Thioredoxin domain. A disulfide bond links Cys495 and Cys498.

The protein belongs to the thioredoxin family. DsbD subfamily.

It is found in the cell inner membrane. It catalyses the reaction [protein]-dithiol + NAD(+) = [protein]-disulfide + NADH + H(+). It carries out the reaction [protein]-dithiol + NADP(+) = [protein]-disulfide + NADPH + H(+). Functionally, required to facilitate the formation of correct disulfide bonds in some periplasmic proteins and for the assembly of the periplasmic c-type cytochromes. Acts by transferring electrons from cytoplasmic thioredoxin to the periplasm. This transfer involves a cascade of disulfide bond formation and reduction steps. In Haemophilus influenzae (strain PittGG), this protein is Thiol:disulfide interchange protein DsbD.